Consider the following 442-residue polypeptide: N-acetyl-S-alkylcysteine sulfoxide monooxygenase (442 aa).

FMN contacts are provided by Asp58, Thr95, His145, Tyr149, Ser219, and Ser220.

It belongs to the NtaA/SnaA/DszA monooxygenase family. Homodimer.

It catalyses the reaction (R)-N-acetyl-S-benzyl-L-cysteine sulfoxide + FMNH2 + O2 = N-acetyl-S-hydroxy-L-cysteine + benzaldehyde + FMN + H2O + H(+). The protein operates within amino-acid metabolism. Its function is as follows. Involved in a cysteine salvage pathway from S-alkylcysteine. Catalyzes the C-S bond cleavage in N-acetyl-S-benzyl-L-cysteine sulfoxide leading to N-acetyl-S-hydroxy-L-cysteine and benzaldehyde. This pathway is likely important in the catabolism of alkylated cysteine generated by proteolysis of alkylated glutathione formed in the detoxification of a wide range of electrophiles. Has much less efficient activity with N-acetyl-S-methyl-L-cysteine sulfoxide as substrate. Cannot use S-alkylated L-cysteine sulfones and ketone analogs as substrates, demonstrating that the sulfoxide is required for activity. The protein is N-acetyl-S-alkylcysteine sulfoxide monooxygenase of Bacillus subtilis (strain 168).